Consider the following 447-residue polypeptide: Thiol-specific monooxygenase (447 aa).

Residues 13–17 (GAGPS), glutamate 38, 46–47 (VW), 91–92 (NT), and 137–138 (DV) contribute to the FAD site. Residue 90-91 (TN) participates in NADP(+) binding. NADP(+) is bound at residue 223 to 226 (SAND).

It belongs to the FMO family. As to quaternary structure, monomer. The cofactor is FAD.

Its function is as follows. Flavin-dependent oxidation of thiol-containing compounds. Probably required for the correct folding of disulfide-bonded proteins. The polypeptide is Thiol-specific monooxygenase (fmo1) (Schizosaccharomyces pombe (strain 972 / ATCC 24843) (Fission yeast)).